Reading from the N-terminus, the 376-residue chain is Response regulator aspartate phosphatase H (376 aa).

6 TPR repeats span residues Y99–V132, A139–H172, I180–I213, A220–K253, P259–R292, and E334–I367.

This sequence belongs to the Rap family. Homodimer. Interacts with phosphorylated Spo0F. Each RapH protomer is bound to a monomer of Spo0F, forming a heterotetrameric complex. May also interact with non-phosphorylated Spo0F to inhibit the sporulation phosphorelay. Interacts with the C-terminal DNA-binding region of ComA. Does not interact with DegU.

It localises to the cytoplasm. Its activity is regulated as follows. Both activities are inhibited by RapH. Its function is as follows. Dual specificity regulatory protein that can control both sporulation and competence by acting on two distinct response regulators: Spo0F and ComA, respectively. Is involved in the temporal separation of competence and sporulation. Acts as a phosphatase that specifically dephosphorylates the sporulation initiation phosphotransferase Spo0F and inhibits its activity. RapH can also antagonize sporulation by sterically blocking phosphoryl transfer to and from Spo0F. In addition, inhibits the activity of ComA, a transcriptional factor that regulates the development of genetic competence. Acts by binding to ComA, leading to the inhibition of its DNA-binding activity. In Bacillus subtilis (strain 168), this protein is Response regulator aspartate phosphatase H (rapH).